Reading from the N-terminus, the 376-residue chain is Glycerol-3-phosphate acyltransferase 9 (376 aa).

Residues 1-78 lie on the Cytoplasmic side of the membrane; that stretch reads MSSTAGRLVT…SNPPEPWNWN (78 aa). S13 is modified (phosphoserine). 3 consecutive transmembrane segments (helical) span residues 79–99, 102–122, and 135–155; these read IYLFPLYCFGVVVRYCILFPL, FTLAFGWIIFLSLFIPVNALL, and VLVEMICSFFVASWTGVVKYH. Over 156–376 the chain is Cytoplasmic; that stretch reads GPRPSIRPKQ…ESILARLEEK (221 aa). The interval 168–180 is catalytic; sequence VANHTSMIDFIVL. The HXXXXD motif signature appears at 171–176; it reads HTSMID. 209–218 lines the sn-glycerol 3-phosphate pocket; that stretch reads GCIWFNRSEA. The tract at residues 242-262 is glycerol-3-phosphate binding; the sequence is IFPEGTCVNNNYTVMFKKGAF. The catalytic stretch occupies residues 266–275; sequence CTVCPIAIKY. Residues 369–373 form an endoplasmic reticulum targeting region; the sequence is ILARL.

It belongs to the 1-acyl-sn-glycerol-3-phosphate acyltransferase family. Self-interacts. Interacts with LPAT2 and LPCAT2. In terms of tissue distribution, up-regulated during embryogenesis. Expressed in seedlings, leaves, stems, roots, floral buds, flowers, pollen, and siliques at various developmental stages.

It localises to the endoplasmic reticulum membrane. It carries out the reaction sn-glycerol 3-phosphate + an acyl-CoA = a 1-acyl-sn-glycero-3-phosphate + CoA. Its pathway is glycerolipid metabolism; triacylglycerol biosynthesis. Functionally, essential protein. Required for male and female gametophytes development. Exhibits sn-1 acyltransferase activity with high specificity for acyl-coenzyme A, thus triggering storage lipid biosynthesis and playing an important role in the Kennedy pathway of glycerolipid biosynthesis. Catalyzes triacylglycerol (TAG) accumulation involved in membrane lipid and oil biosynthesis, especially in seeds. Also contributes to the biosynthesis of both polar lipids and TAG in developing leaves, as well as lipid droplet production in developing pollen grains. Seems to not contribute to surface lipid biosynthesis (e.g. waxes and cutin). The protein is Glycerol-3-phosphate acyltransferase 9 of Arabidopsis thaliana (Mouse-ear cress).